A 236-amino-acid polypeptide reads, in one-letter code: Thylakoid lumenal 17.4 kDa protein, chloroplastic (236 aa).

2 Pentapeptide repeat domains span residues 124–163 (TNLK…SFKG) and 169–208 (AVID…VFED).

As to quaternary structure, interacts in vitro with LTO1.

The protein resides in the plastid. It is found in the chloroplast thylakoid lumen. This Arabidopsis thaliana (Mouse-ear cress) protein is Thylakoid lumenal 17.4 kDa protein, chloroplastic.